We begin with the raw amino-acid sequence, 198 residues long: MIEFVYPHTQLVAGVDEVGRGPLVGAVVTAAVILDPARPIAGLNDSKKLSEKRRLALCEEIKEKALSWSLGRAEPHEIDELNILHATMLAMQRAVAGLHIAPEYVLIDGNRCPKLPMPAMAVVKGDSRVPEISAASILAKVTRDAEMAALDIVFPQYGFAQHKGYPTAFHLEKLAEYGATEHHRRSFGPVKRALGLAS.

The RNase H type-2 domain occupies 10–198 (QLVAGVDEVG…PVKRALGLAS (189 aa)). Residues Asp16, Glu17, and Asp108 each contribute to the a divalent metal cation site.

This sequence belongs to the RNase HII family. It depends on Mn(2+) as a cofactor. Mg(2+) serves as cofactor.

The protein localises to the cytoplasm. The catalysed reaction is Endonucleolytic cleavage to 5'-phosphomonoester.. Its function is as follows. Endonuclease that specifically degrades the RNA of RNA-DNA hybrids. The protein is Ribonuclease HII of Escherichia fergusonii (strain ATCC 35469 / DSM 13698 / CCUG 18766 / IAM 14443 / JCM 21226 / LMG 7866 / NBRC 102419 / NCTC 12128 / CDC 0568-73).